The following is a 394-amino-acid chain: Chorismate synthase (394 aa).

Residues arginine 40 and arginine 46 each coordinate NADP(+). Residues 135 to 137 (RAS), 255 to 256 (QA), glycine 302, 317 to 321 (KPISS), and arginine 343 contribute to the FMN site.

This sequence belongs to the chorismate synthase family. In terms of assembly, homotetramer. Requires FMNH2 as cofactor.

The catalysed reaction is 5-O-(1-carboxyvinyl)-3-phosphoshikimate = chorismate + phosphate. It participates in metabolic intermediate biosynthesis; chorismate biosynthesis; chorismate from D-erythrose 4-phosphate and phosphoenolpyruvate: step 7/7. Functionally, catalyzes the anti-1,4-elimination of the C-3 phosphate and the C-6 proR hydrogen from 5-enolpyruvylshikimate-3-phosphate (EPSP) to yield chorismate, which is the branch point compound that serves as the starting substrate for the three terminal pathways of aromatic amino acid biosynthesis. This reaction introduces a second double bond into the aromatic ring system. The chain is Chorismate synthase from Parafrankia sp. (strain EAN1pec).